We begin with the raw amino-acid sequence, 177 residues long: ATP-dependent protease subunit HslV (177 aa).

Threonine 7 is a catalytic residue. 3 residues coordinate Na(+): glycine 162, cysteine 165, and threonine 168.

It belongs to the peptidase T1B family. HslV subfamily. In terms of assembly, a double ring-shaped homohexamer of HslV is capped on each side by a ring-shaped HslU homohexamer. The assembly of the HslU/HslV complex is dependent on binding of ATP.

It is found in the cytoplasm. It carries out the reaction ATP-dependent cleavage of peptide bonds with broad specificity.. Its activity is regulated as follows. Allosterically activated by HslU binding. In terms of biological role, protease subunit of a proteasome-like degradation complex believed to be a general protein degrading machinery. The sequence is that of ATP-dependent protease subunit HslV from Persephonella marina (strain DSM 14350 / EX-H1).